A 955-amino-acid chain; its full sequence is Serine-aspartate repeat-containing protein C (955 aa).

The signal sequence occupies residues 1–50; sequence MNNKKTVTNRKGMIPNRLNKFSIRKYSVGTASILVGTTLIFGLSGHEAKA. The disordered stretch occupies residues 51–166; the sequence is AEHTNGELNQ…TPKTTTIKPR (116 aa). A ligand binding A region region spans residues 51-495; that stretch reads AEHTNGELNQ…GSSTANGDQK (445 aa). A compositionally biased stretch (polar residues) spans 56 to 71; that stretch reads GELNQSKNETTAPSEN. Basic and acidic residues predominate over residues 72–83; sequence KTTEKVDSHQLK. Over residues 84-114 the composition is skewed to polar residues; the sequence is DNTQTATADQPKVTMSDSATFKETSSNMQSP. Positions 115–132 are enriched in low complexity; that stretch reads QNATASQSTTQTSNVTTN. Polar residues predominate over residues 133–164; the sequence is DKSSTTYSNETDKSNLTQAKDVSATPKTTTIK. CNA-B domains lie at 496-606 and 607-717; these read KYNL…YKTP and KYSL…EEET. The tract at residues 678-935 is disordered; that stretch reads TQTGTNTTED…NNSNNGTLFG (258 aa). Composition is skewed to acidic residues over residues 685-695 and 712-894; these read TEDDKDADGGE and YYEE…DSDS. An LPXTG sorting signal motif is present at residues 918–922; the sequence is LPETG. The segment covering 920–935 has biased composition (low complexity); that stretch reads ETGSENNNSNNGTLFG. Position 921 is a pentaglycyl murein peptidoglycan amidated threonine (Thr-921). A propeptide spans 922–955 (removed by sortase); the sequence is GSENNNSNNGTLFGGLFAALGSLLLFGRRKKQNK.

It belongs to the serine-aspartate repeat-containing protein (SDr) family. In terms of assembly, homodimerizes; via N2-Domain. Interacts with host NRXN1; this interaction mediates bacterial attachment to host cells.

It localises to the secreted. The protein resides in the cell wall. Its function is as follows. Cell surface-associated calcium-binding protein which plays an important role in adhesion and pathogenesis. Mediates interactions with components of the extracellular matrix such as host NRXN1 to promote bacterial adhesion. The protein is Serine-aspartate repeat-containing protein C (sdrC) of Staphylococcus aureus (strain MW2).